The primary structure comprises 1111 residues: Probable arabinosyltransferase A (1111 aa).

13 consecutive transmembrane segments (helical) span residues 12–34 (IIRL…VPLL), 205–224 (IAVG…LSAL), 333–355 (VWMR…HWVL), 370–387 (VAVL…LPFN), 394–413 (PLIA…AIAL), 423–445 (AVVA…ALLT), 462–484 (GLLA…VFHS), 530–547 (FPVL…VVLL), 554–576 (GLAS…LLTF), 581–603 (WAIQ…AFAF), 615–637 (TVYI…GWFG), 652–674 (IAGH…LAGG), and 695–717 (FLAT…GSLA). The segment at 804-831 (GLVNSDASPNKPNVTFSDSAGTAGGKGP) is disordered. Polar residues predominate over residues 808 to 823 (SDASPNKPNVTFSDSA).

This sequence belongs to the emb family.

The protein resides in the cell membrane. Its function is as follows. Arabinosyl transferase responsible for the polymerization of arabinose into the arabinan of arabinogalactan. The polypeptide is Probable arabinosyltransferase A (embA) (Mycobacterium leprae (strain TN)).